The following is a 121-amino-acid chain: Autophagy-related protein 8 (121 aa).

Gly-116 is lipidated: Phosphatidylethanolamine amidated glycine. Residues 117-121 (DFETA) constitute a propeptide, removed in mature form.

It belongs to the ATG8 family. Post-translationally, the C-terminal 5 residues are removed to expose Gly-116 at the C-terminus. The C-terminal Gly is then amidated with phosphatidylethanolamine by an activating system similar to that for ubiquitin.

Its subcellular location is the cytoplasmic vesicle. The protein resides in the autophagosome membrane. The protein localises to the vacuole membrane. In terms of biological role, ubiquitin-like modifier involved in autophagosome formation. With cpr-1/atg4, mediates the delivery of the autophagosomes to the vacuole via the microtubule cytoskeleton. Required for selective autophagic degradation of the nucleus (nucleophagy) as well as for mitophagy which contributes to regulate mitochondrial quantity and quality by eliminating the mitochondria to a basal level to fulfill cellular energy requirements and preventing excess ROS production. Also participates in membrane fusion events that take place in the early secretory pathway. Also involved in endoplasmic reticulum-specific autophagic process and is essential for the survival of cells subjected to severe ER stress. The apg-6/atg8-PE conjugate mediates tethering between adjacent membranes and stimulates membrane hemifusion, leading to expansion of the autophagosomal membrane during autophagy. The chain is Autophagy-related protein 8 (apg-6) from Neurospora crassa (strain ATCC 24698 / 74-OR23-1A / CBS 708.71 / DSM 1257 / FGSC 987).